Consider the following 217-residue polypeptide: Ras-related protein Rab-39A (217 aa).

Positions 17, 20, 21, 22, 23, and 44 each coordinate GTP. Serine 22 is a binding site for Mg(2+). A switch-I region spans residues 39–47; the sequence is PACDPTVGV. Positions 44 and 68 each coordinate Mg(2+). Residues glycine 71, histidine 127, lysine 128, aspartate 130, alanine 158, and lysine 159 each coordinate GTP. Residues 71–87 are switch-II; sequence GQERFRSITRSYYRNSV. 2 S-geranylgeranyl cysteine lipidation sites follow: cysteine 215 and cysteine 217. Cysteine 217 carries the post-translational modification Cysteine methyl ester.

This sequence belongs to the small GTPase superfamily. Rab family. Interacts (GDP-bound) with C9orf72; C9orf72 acts as a GEF for RAB39A. Interacts (GTP-bound) with HOPS complex components VPS39 and VPS41, and STX17; interaction between HOPS components and RAB39A contributes to obtaining a functional HOPS complex that promotes membrane fusion driven by STX17-SNAP29-VAMP8. Interacts with BECN1. Probably associates with the PI3K (PI3KC3/PI3K-III/class III phosphatidylinositol 3-kinase) complex. Interacts with UACA. Interacts with isoform a of RASSF1. Does not interact with isoform c of RASSF1. Requires Mg(2+) as cofactor. In terms of processing, prenylated. Prenylation is required for association with cellular membranes.

The protein localises to the cell membrane. It localises to the cytoplasmic vesicle. Its subcellular location is the phagosome membrane. The protein resides in the lysosome membrane. It is found in the autolysosome membrane. It carries out the reaction GTP + H2O = GDP + phosphate + H(+). With respect to regulation, regulated by guanine nucleotide exchange factors (GEFs) including c9Orf72, which promote the exchange of bound GDP for free GTP. Regulated by GTPase activating proteins (GAPs) which increase the GTP hydrolysis activity. Inhibited by GDP dissociation inhibitors (GDIs). Its function is as follows. The small GTPases Rab are key regulators of intracellular membrane trafficking, from the formation of transport vesicles to their fusion with membranes. Rabs cycle between an inactive GDP-bound form and an active GTP-bound form that is able to recruit to membranes different sets of downstream effectors directly responsible for vesicle formation, movement, tethering and fusion. RAB39A regulates autophagosome-lysosome fusion via recruitment of the HOPS endosomal tethering complex onto lysosomes; this process involves lysosomal RAB39A and autophagosomal RAB2A recruitment of HOPS subcomplexes VPS41-VPS16-VPS18-VPS33A and VPS39-VPS11, respectively, which assemble into a functional complex to mediate membrane tethering and SNAREs-driven membrane fusion. Also negatively regulates lipopolysaccharide (LPS)-induced autophagosome formation in macrophages, possibly by implicating PI3K. Promotes the delivery of MHC-I molecules from the ER to phagosomes and the generation of peptide-loaded MHC-I complexes in phagosomes, thus enhancing antigen cross-presentation by dendritic cells. Plays a role in the maturation and acidification of phagosomes that engulf pathogens, such as S.aureus and M.tuberculosis. Plays a role in the fusion of phagosomes with lysosomes. May be involved in multiple neurite formation. The chain is Ras-related protein Rab-39A from Homo sapiens (Human).